The sequence spans 108 residues: Protein RnfH (108 aa).

The tract at residues 86-108 (ARRRRAEKAKEEGRANKVTGGRA) is disordered.

This sequence belongs to the UPF0125 (RnfH) family.

The polypeptide is Protein RnfH (Pseudoalteromonas atlantica (strain T6c / ATCC BAA-1087)).